The primary structure comprises 265 residues: Transcription factor LBX1 (265 aa).

Residues 1 to 20 are compositionally biased toward basic and acidic residues; it reads MTSKDEAKSSSVEERRRHAL. Residues 1–33 are disordered; the sequence is MTSKDEAKSSSVEERRRHALDLLPPPANSNKPL. The segment at residues 125 to 184 is a DNA-binding region (homeobox); sequence RRKSRTAFTNHQIYELEKRFLYQKYLSPADRDQIAQQLGLTNAQVITWFQNRRAKLKRDL. Positions 212 to 265 are disordered; it reads EEETNSVRDDSRSRSPQLGLSGHMPLSPSSPLTEQHTSKECSEDEEDVEIDVDD. Residues 253–265 are compositionally biased toward acidic residues; the sequence is SEDEEDVEIDVDD.

Its subcellular location is the nucleus. In terms of biological role, transcription factor that controls hypaxial muscle development by down-regulating myod1 and cdkn1b/p27, thereby allowing myoblasts to proliferate before the onset of terminal differentiation. This is Transcription factor LBX1 from Xenopus tropicalis (Western clawed frog).